The chain runs to 197 residues: MPIGIPKVPYRLPGGQSQWIDIFNRLALDRIIFLGREVDDEIANAIIASMLYLDSEDPEKDIFLYINSPGGSVSAGLAIYDTMQHVRADVATMCVGLAASMGSFLLTAGAKGKRTSLPHSRIMIHQPLGGAQGQATDIGIQAKEILYTKDRLNQILSERTGQPLERIERDTDRDFFMSAEDAKQYGLIDQVVQHRPV.

The Nucleophile role is filled by serine 100. The active site involves histidine 125.

Belongs to the peptidase S14 family. As to quaternary structure, fourteen ClpP subunits assemble into 2 heptameric rings which stack back to back to give a disk-like structure with a central cavity, resembling the structure of eukaryotic proteasomes.

It is found in the cytoplasm. The enzyme catalyses Hydrolysis of proteins to small peptides in the presence of ATP and magnesium. alpha-casein is the usual test substrate. In the absence of ATP, only oligopeptides shorter than five residues are hydrolyzed (such as succinyl-Leu-Tyr-|-NHMec, and Leu-Tyr-Leu-|-Tyr-Trp, in which cleavage of the -Tyr-|-Leu- and -Tyr-|-Trp bonds also occurs).. Its function is as follows. Cleaves peptides in various proteins in a process that requires ATP hydrolysis. Has a chymotrypsin-like activity. Plays a major role in the degradation of misfolded proteins. This is ATP-dependent Clp protease proteolytic subunit 1 from Gloeobacter violaceus (strain ATCC 29082 / PCC 7421).